Consider the following 380-residue polypeptide: E3 ubiquitin-protein ligase PHF7 (380 aa).

The interval 1 to 23 (MRTIKEKKEHPRLRKTARTKKVT) is disordered. Residues 10-23 (HPRLRKTARTKKVT) are compositionally biased toward basic residues. Residues 30-68 (GPVCLLCFQEPGDPEKLGEFLQKDNLCVHYFCLILSSKL) form a C2HC pre-PHD-type zinc finger. Zn(2+) contacts are provided by Cys33, Cys36, His58, and Cys61. The tract at residues 67-92 (KLPQKGQPNRGLHGFMPEDIKKEAAR) is required for interaction and ubiquitination of the nucleosome core particle. A PHD-type zinc finger spans residues 96 to 145 (KVCFVCKRKGAAIRCQKDQCVQNFHLPCGQERGCLSQFFGEYKSYCGKHR). Zn(2+)-binding residues include Cys98, Cys101, Cys110, Cys115, His120, Cys123, Cys141, His144, Cys159, Cys162, Cys178, Cys179, His185, Cys188, Cys203, Cys206, Cys247, Cys252, Cys272, Cys275, His281, Cys284, Cys296, and Cys299. The segment at 150 to 306 (IHQRSFGESC…NECLPASTED (157 aa)) is required for interaction with ubiquitinated UBE2D2. The RING-type; degenerate zinc-finger motif lies at 159–207 (CVLCCEDLSRASVENIRSPCCSQAIYHRKCIQKYAHTSAKHFFKCPQCN). Residues 243–300 (RYQHCDAPICLYEQGRDSFEDEGRWRLILCATCGSHGTHRDCSSLRPNSKKWECNECL) form a required for association with and ubiquitination of H3 region. A compositionally biased stretch (low complexity) spans 352–367 (EKPESSSGSSCQSWRS). Residues 352–380 (EKPESSSGSSCQSWRSKGIKVTKDCKKSK) form a disordered region.

In terms of assembly, interacts with MEF2C; the interaction promotes MEF2C binding to its transcription targets. Interacts with GATA4; the interaction promotes GATA4 binding to its transcription targets. Interacts with UBE2D2; the interaction inhibits cleavage of PHF7 and promotes association of the complex with the nucleosome core particle.

It localises to the nucleus. The enzyme catalyses S-ubiquitinyl-[E2 ubiquitin-conjugating enzyme]-L-cysteine + [acceptor protein]-L-lysine = [E2 ubiquitin-conjugating enzyme]-L-cysteine + N(6)-ubiquitinyl-[acceptor protein]-L-lysine.. It functions in the pathway protein modification; protein ubiquitination. Its function is as follows. E3 ubiquitin-protein ligase which ubiquitinates histone H3 at 'Lys-14'. Required for male fertility, via inhibition of SPOP-mediated BRDT degradation when in the presence of acetylated histone H4 in early condensing spermatids. Stabilization of BRDT allows it to facilitate histone removal in early condensing spermatids and promote the progression of histone-to-protamine exchange. Promotes the expression of steroidogenesis proteins in the testes, and as a result plays a role in maintaining testosterone levels and repressing osteoclastogenesis. Promotes transcription of cardiac enhancer genes by facilitating binding of cardiac transcription factors such as MEF2C and GATA4 to target gene promoters. Ubiquitinates histone H4. Ubiquitinates histone H2A and H3 as part of the nucleosome core particle. The protein is E3 ubiquitin-protein ligase PHF7 of Rattus norvegicus (Rat).